The sequence spans 324 residues: MKKKIWKSSASIEDLIKRSNIISNIRLFFSKKNILEVETPILSRSTVTDVHLTSFETNYISSDNIDELKLWLTTSPEYHMKRLLASESGSIYQICHSFRNKELGRYHNPEFTMLEWYQPFCSMKKFIKEIDIFLQIILKCNKSDKVSYQDLFIDFLKIDPLCANLLELHQISKKLKLDHLTHSENNLNKLIQLLFTLKIEPNIGKEKPLFVYHFPAEQASLAAINLKDPRISERFEIFFKGIELGNGFYELIDVNEQKKRFIRDNKERRSMNLPIRKIDNFFLSALSYGLPPCSGVAIGLDRLIMLILNKKSIHEVIAFPVDRC.

Residue 75 to 77 coordinates substrate; the sequence is SPE. Residues 99–101 and Asn108 contribute to the ATP site; that span reads RNK. Tyr117 provides a ligand contact to substrate. ATP is bound at residue 243 to 244; the sequence is EL. Glu250 serves as a coordination point for substrate. ATP is bound at residue Gly299.

This sequence belongs to the class-II aminoacyl-tRNA synthetase family. EpmA subfamily. As to quaternary structure, homodimer.

It carries out the reaction D-beta-lysine + L-lysyl-[protein] + ATP = N(6)-((3R)-3,6-diaminohexanoyl)-L-lysyl-[protein] + AMP + diphosphate + H(+). Functionally, with EpmB is involved in the beta-lysylation step of the post-translational modification of translation elongation factor P (EF-P). Catalyzes the ATP-dependent activation of (R)-beta-lysine produced by EpmB, forming a lysyl-adenylate, from which the beta-lysyl moiety is then transferred to the epsilon-amino group of a conserved specific lysine residue in EF-P. This is Elongation factor P--(R)-beta-lysine ligase from Buchnera aphidicola subsp. Acyrthosiphon pisum (strain 5A).